We begin with the raw amino-acid sequence, 808 residues long: Potassium transporter 5 (808 aa).

Residues 1–65 (MAEEVGETRG…NQVNWKKTLS (65 aa)) lie on the Cytoplasmic side of the membrane. Residues 66–86 (LTFQSIGVVYGDIGTSPLYVY) form a helical membrane-spanning segment. The Extracellular portion of the chain corresponds to 87-102 (ESTFPDKIGSKEDILG). A helical transmembrane segment spans residues 103–123 (VLSLIIYTLVLLPMLKYVFIV). Residues 124–189 (LRANDNGDGG…EKMENSKNIK (66 aa)) lie on the Cytoplasmic side of the membrane. Residues 190-210 (ILLFLVTILGTSMVIGDGVLT) traverse the membrane as a helical segment. Topologically, residues 211–221 (PCISVLSAVSG) are extracellular. The chain crosses the membrane as a helical span at residues 222-242 (IGSLGQDAVVGISIAILIVLF). Over 243–251 (CAQRLGTDK) the chain is Cytoplasmic. The helical transmembrane segment at 252 to 272 (VGFSFAPIILLWFSFIGGIGL) threads the bilayer. Over 273–302 (YNLFKYDVSVLRAFNPKYMFDYFKRNGKQG) the chain is Extracellular. The chain crosses the membrane as a helical span at residues 303–323 (WISLGGVVLAVTGTEAMFADL). Topologically, residues 324–327 (GHFN) are cytoplasmic. The helical transmembrane segment at 328–348 (VQAIQISFSGIVFPALLCAYA) threads the bilayer. At 349 to 379 (GQAAYLTKFPDDVSKTFYKSIPDPLYWPTFV) the chain is on the extracellular side. The helical transmembrane segment at 380–400 (VAVAAAIIASQAMISGAFAII) threads the bilayer. The Cytoplasmic segment spans residues 401-424 (SQSLSLGCFPRVKVIHTSAKYEGQ). The helical transmembrane segment at 425 to 445 (VYIPEVNYILMIACIMVCLGF) threads the bilayer. Residues 446–456 (KTTEKIGNAYG) are Extracellular-facing. Residues 457-477 (IAVVAVMVITTCMVTIIMLVV) traverse the membrane as a helical segment. The Cytoplasmic segment spans residues 478–482 (WRTKM). Residues 483-503 (IWIAFFFFGFICIEAVYLSSV) form a helical membrane-spanning segment. Residues 504–510 (LYKFKDG) are Extracellular-facing. The chain crosses the membrane as a helical span at residues 511 to 531 (GFLPLAFSFFLMIIMGIWHYI). The Cytoplasmic portion of the chain corresponds to 532 to 808 (HKERYMYELK…LLRVGMTYEI (277 aa)). Residues 699–722 (LQQPNPSRVSSGSIHSNSGIKSTK) form a disordered region.

Belongs to the HAK/KUP transporter (TC 2.A.72.3) family. Expressed in the roots.

Its subcellular location is the cell membrane. It carries out the reaction K(+)(in) = K(+)(out). High-affinity potassium transporter that functions under low potassium conditions. Involved in the positive regulation of salt tolerance under salt stress. This chain is Potassium transporter 5, found in Manihot esculenta (Cassava).